A 585-amino-acid polypeptide reads, in one-letter code: Proline--tRNA ligase (585 aa).

The protein belongs to the class-II aminoacyl-tRNA synthetase family. ProS type 1 subfamily. In terms of assembly, homodimer.

The protein localises to the cytoplasm. The catalysed reaction is tRNA(Pro) + L-proline + ATP = L-prolyl-tRNA(Pro) + AMP + diphosphate. Functionally, catalyzes the attachment of proline to tRNA(Pro) in a two-step reaction: proline is first activated by ATP to form Pro-AMP and then transferred to the acceptor end of tRNA(Pro). As ProRS can inadvertently accommodate and process non-cognate amino acids such as alanine and cysteine, to avoid such errors it has two additional distinct editing activities against alanine. One activity is designated as 'pretransfer' editing and involves the tRNA(Pro)-independent hydrolysis of activated Ala-AMP. The other activity is designated 'posttransfer' editing and involves deacylation of mischarged Ala-tRNA(Pro). The misacylated Cys-tRNA(Pro) is not edited by ProRS. The sequence is that of Proline--tRNA ligase from Acidobacterium capsulatum (strain ATCC 51196 / DSM 11244 / BCRC 80197 / JCM 7670 / NBRC 15755 / NCIMB 13165 / 161).